A 412-amino-acid chain; its full sequence is CCA-adding enzyme (412 aa).

2 residues coordinate ATP: Gly-8 and Arg-11. Residues Gly-8 and Arg-11 each contribute to the CTP site. Residues Asp-21 and Asp-23 each coordinate Mg(2+). Arg-91, Arg-137, and Arg-140 together coordinate ATP. CTP is bound by residues Arg-91, Arg-137, and Arg-140.

The protein belongs to the tRNA nucleotidyltransferase/poly(A) polymerase family. Bacterial CCA-adding enzyme type 2 subfamily. Mg(2+) serves as cofactor.

It carries out the reaction a tRNA precursor + 2 CTP + ATP = a tRNA with a 3' CCA end + 3 diphosphate. It catalyses the reaction a tRNA with a 3' CCA end + 2 CTP + ATP = a tRNA with a 3' CCACCA end + 3 diphosphate. Catalyzes the addition and repair of the essential 3'-terminal CCA sequence in tRNAs without using a nucleic acid template. Adds these three nucleotides in the order of C, C, and A to the tRNA nucleotide-73, using CTP and ATP as substrates and producing inorganic pyrophosphate. tRNA 3'-terminal CCA addition is required both for tRNA processing and repair. Also involved in tRNA surveillance by mediating tandem CCA addition to generate a CCACCA at the 3' terminus of unstable tRNAs. While stable tRNAs receive only 3'-terminal CCA, unstable tRNAs are marked with CCACCA and rapidly degraded. The sequence is that of CCA-adding enzyme from Buchnera aphidicola subsp. Schizaphis graminum (strain Sg).